Reading from the N-terminus, the 527-residue chain is MAIKATDLSAIIKAQIKDFNQNVTFDEVGRVITVGDGIALVSGLNNVEYGELVQFESGVLGMTMNLEEDLVGIVVMGDDRSIVEGNLVKRMRQVISTPVGDELLGRVVNALAKPIDGKGKINTSYHAPIFKVAPGVMARQEVNEPLETGILAIDAMIPIGKGQRELIIGDRQTGKTAIAIDTILNQKGKHVYCIYIAIGQKNSTISQIVDILNKHDALKYTTIISASAAESAPLQYIAPYTGVTIAEEWMAKGKDVLVIYDDLSKHAVAYRTLSLLLRRPPGREAYPGDVFYLHSQLLERAARLNKENGGGSITALPIIETQAEDISAYIPTNVISITDGQIFTKESLFNSGQRPAIDIGYSVSRVGSAAQTKLMKKVVSSLKLELAQYNEMLAFAQFGSDLDQNTRNILEHGAKVYELLKQPQYSPYEQIKQILILFCSKYRLINPIPKAYITKYRDELLNYFLTNSKTLQVISQLTKASDWTEELIESVWEHIMAFNESFIPTIPNLNKYQGQEIPPLPWKAYKK.

169 to 176 is an ATP binding site; it reads GDRQTGKT.

It belongs to the ATPase alpha/beta chains family. In terms of assembly, F-type ATPases have 2 components, CF(1) - the catalytic core - and CF(0) - the membrane proton channel. CF(1) has five subunits: alpha(3), beta(3), gamma(1), delta(1), epsilon(1). CF(0) has three main subunits: a(1), b(2) and c(9-12). The alpha and beta chains form an alternating ring which encloses part of the gamma chain. CF(1) is attached to CF(0) by a central stalk formed by the gamma and epsilon chains, while a peripheral stalk is formed by the delta and b chains.

The protein resides in the cell membrane. The catalysed reaction is ATP + H2O + 4 H(+)(in) = ADP + phosphate + 5 H(+)(out). In terms of biological role, produces ATP from ADP in the presence of a proton gradient across the membrane. The alpha chain is a regulatory subunit. The sequence is that of ATP synthase subunit alpha from Metamycoplasma arthritidis (strain 158L3-1) (Mycoplasma arthritidis).